Consider the following 157-residue polypeptide: Endoribonuclease YbeY (157 aa).

Residues H115, H119, and H125 each coordinate Zn(2+).

This sequence belongs to the endoribonuclease YbeY family. The cofactor is Zn(2+).

It is found in the cytoplasm. Functionally, single strand-specific metallo-endoribonuclease involved in late-stage 70S ribosome quality control and in maturation of the 3' terminus of the 16S rRNA. The polypeptide is Endoribonuclease YbeY (Micrococcus luteus (strain ATCC 4698 / DSM 20030 / JCM 1464 / CCM 169 / CCUG 5858 / IAM 1056 / NBRC 3333 / NCIMB 9278 / NCTC 2665 / VKM Ac-2230) (Micrococcus lysodeikticus)).